The primary structure comprises 586 residues: A-type ATP synthase subunit A (586 aa).

232–239 (GPFGSGKT) serves as a coordination point for ATP.

The protein belongs to the ATPase alpha/beta chains family. Has multiple subunits with at least A(3), B(3), C, D, E, F, H, I and proteolipid K(x).

It is found in the cell membrane. It carries out the reaction ATP + H2O + 4 H(+)(in) = ADP + phosphate + 5 H(+)(out). In terms of biological role, component of the A-type ATP synthase that produces ATP from ADP in the presence of a proton gradient across the membrane. The A chain is the catalytic subunit. The protein is A-type ATP synthase subunit A of Methanococcus vannielii (strain ATCC 35089 / DSM 1224 / JCM 13029 / OCM 148 / SB).